We begin with the raw amino-acid sequence, 93 residues long: MKPDIHPQYRTVLFHDTAADAYFLIGSTVDTDRTQQHTDGTTYPYVALDVSSASHPMYTGQQRKATTEGRIAGFNKRFATFGSAGKKETAAAQ.

The protein belongs to the bacterial ribosomal protein bL31 family. Type B subfamily. In terms of assembly, part of the 50S ribosomal subunit.

The sequence is that of Large ribosomal subunit protein bL31B from Pseudomonas syringae pv. syringae (strain B728a).